The sequence spans 1381 residues: DNA-directed RNA polymerase subunit beta' (1381 aa).

Zn(2+) contacts are provided by C70, C72, C85, and C88. Mg(2+) is bound by residues D461, D463, and D465. Positions 801, 875, 882, and 885 each coordinate Zn(2+). Positions 1362–1381 (VEIEGDENSNKKSLDMHAAN) are disordered. The span at 1369–1381 (NSNKKSLDMHAAN) shows a compositional bias: basic and acidic residues.

It belongs to the RNA polymerase beta' chain family. In terms of assembly, the RNAP catalytic core consists of 2 alpha, 1 beta, 1 beta' and 1 omega subunit. When a sigma factor is associated with the core the holoenzyme is formed, which can initiate transcription. Mg(2+) serves as cofactor. The cofactor is Zn(2+).

It catalyses the reaction RNA(n) + a ribonucleoside 5'-triphosphate = RNA(n+1) + diphosphate. In terms of biological role, DNA-dependent RNA polymerase catalyzes the transcription of DNA into RNA using the four ribonucleoside triphosphates as substrates. The chain is DNA-directed RNA polymerase subunit beta' from Syntrophus aciditrophicus (strain SB).